Here is an 874-residue protein sequence, read N- to C-terminus: Alanine--tRNA ligase (874 aa).

The Zn(2+) site is built by histidine 563, histidine 567, cysteine 665, and histidine 669.

The protein belongs to the class-II aminoacyl-tRNA synthetase family. Zn(2+) serves as cofactor.

Its subcellular location is the cytoplasm. It catalyses the reaction tRNA(Ala) + L-alanine + ATP = L-alanyl-tRNA(Ala) + AMP + diphosphate. In terms of biological role, catalyzes the attachment of alanine to tRNA(Ala) in a two-step reaction: alanine is first activated by ATP to form Ala-AMP and then transferred to the acceptor end of tRNA(Ala). Also edits incorrectly charged Ser-tRNA(Ala) and Gly-tRNA(Ala) via its editing domain. The polypeptide is Alanine--tRNA ligase (Actinobacillus pleuropneumoniae serotype 5b (strain L20)).